The primary structure comprises 398 residues: Probable elongation factor 1-gamma (398 aa).

Residues 66 to 199 enclose the GST C-terminal domain; the sequence is GTSANAETVQ…SVAQFNQAKF (134 aa). Positions 210 to 248 are disordered; sequence APKAEKPKKEAKPAAAAAQPEDDEPKEEKSKDPFQDMPK. Over residues 211–221 the composition is skewed to basic and acidic residues; the sequence is PKAEKPKKEAK. An EF-1-gamma C-terminal domain is found at 239–398; it reads SKDPFQDMPK…KKFNQGKIFK (160 aa).

In terms of assembly, EF-1 is composed of four subunits: alpha, beta, delta, and gamma. In terms of processing, AMPylated by fic-1.

Functionally, probably plays a role in anchoring the complex to other cellular components. This Caenorhabditis elegans protein is Probable elongation factor 1-gamma.